We begin with the raw amino-acid sequence, 201 residues long: Thymidine kinase (201 aa).

Residues 9–16 (SAMNAGKS) and 87–90 (DECH) contribute to the ATP site. The active-site Proton acceptor is E88. Residues C145, C147, C182, and H185 each contribute to the Zn(2+) site.

Belongs to the thymidine kinase family. Homotetramer.

Its subcellular location is the cytoplasm. The enzyme catalyses thymidine + ATP = dTMP + ADP + H(+). In Photorhabdus laumondii subsp. laumondii (strain DSM 15139 / CIP 105565 / TT01) (Photorhabdus luminescens subsp. laumondii), this protein is Thymidine kinase.